The following is a 101-amino-acid chain: Small ribosomal subunit protein uS14 (101 aa).

Belongs to the universal ribosomal protein uS14 family. As to quaternary structure, part of the 30S ribosomal subunit. Contacts proteins S3 and S10.

Binds 16S rRNA, required for the assembly of 30S particles and may also be responsible for determining the conformation of the 16S rRNA at the A site. The protein is Small ribosomal subunit protein uS14 of Shewanella halifaxensis (strain HAW-EB4).